We begin with the raw amino-acid sequence, 232 residues long: ATP-dependent Clp protease proteolytic subunit 2 (232 aa).

The active-site Nucleophile is the S124. Residue H149 is part of the active site.

This sequence belongs to the peptidase S14 family. As to quaternary structure, fourteen ClpP subunits assemble into 2 heptameric rings which stack back to back to give a disk-like structure with a central cavity, resembling the structure of eukaryotic proteasomes.

Its subcellular location is the cytoplasm. The catalysed reaction is Hydrolysis of proteins to small peptides in the presence of ATP and magnesium. alpha-casein is the usual test substrate. In the absence of ATP, only oligopeptides shorter than five residues are hydrolyzed (such as succinyl-Leu-Tyr-|-NHMec, and Leu-Tyr-Leu-|-Tyr-Trp, in which cleavage of the -Tyr-|-Leu- and -Tyr-|-Trp bonds also occurs).. Functionally, cleaves peptides in various proteins in a process that requires ATP hydrolysis. Has a chymotrypsin-like activity. Plays a major role in the degradation of misfolded proteins. The sequence is that of ATP-dependent Clp protease proteolytic subunit 2 from Nostoc sp. (strain PCC 7120 / SAG 25.82 / UTEX 2576).